The sequence spans 835 residues: MSDTDGKKTLGLRGSRPGNVKQSFSHGRTKNVVVETKRKRVVVPKPGAGKPSAGGSSPAGDPSRRPAGISDAEMERRLNALKAAKARESEEAAQREAEEKARAEERERRRAEQEAKEREQREAEQRAREKAEEEERQRREAEEEAKRAAVRAAAEQEAPKAERSAERAPAAARPEGGDNARRTTDRDREREQRQTRGKGRQDGRRSGKLTLSQVTDGEGGRQKSLAAMKRKQERARQKAMGGAAEREKVIREVQLPEAIVVSELANRMAERVADVVKELMKMGMMVTQNQTIDADTAELIIEEFGHKVVRVSDSDVEDVISDIEDAEEDLKPRPPVITIMGHVDHGKTSLLDAIRDAKVVAGEAGGITQHIGAYQVKTDGGATLSFLDTPGHAAFTSMRSRGAQVTDIVVLVVAADDAVMPQTVEAINHAKAAGVPMIVAINKIDKPEANPTKVRTDLLQHEVVVEAMSGEVQDVEVSAKTGEGLDELLEAIALQAEILELKANPDRPAQGAVIEAQLDVGRGPVATVLIQKGTLRQGDIFVVGEQYGKVRALINDKGERVSEAGPSVPVEVLGLNGTPEAGDVLNVTSTEAQAREIAEYRAQVAKDKRAAAGAATTLEQLMAKAKADENVAELPILVKADVQGSAEAIVQAMEKIGNDEVRVRVLHSGVGAITETDVGLAEASGAPIMGFNVRANASARNTANQKGVEIRYYSVIYDLVDDVKAAASGLLSAEIRENFIGYANIKEVFKVSNVGKVAGCLVTEGVARRSAGVRLLRDNVVIHEGTLKTLKRFKDEVAEVQSGQECGMAFENYDDIRPGDVIEIFEREEVTRTLT.

The disordered stretch occupies residues 1–243; the sequence is MSDTDGKKTL…RARQKAMGGA (243 aa). Positions 43 to 67 are enriched in low complexity; the sequence is VPKPGAGKPSAGGSSPAGDPSRRPA. Composition is skewed to basic and acidic residues over residues 85-147, 157-166, and 175-205; these read KARE…EAKR, EAPKAERSAE, and EGGD…DGRR. The region spanning 332-500 is the tr-type G domain; that stretch reads PRPPVITIMG…AIALQAEILE (169 aa). The G1 stretch occupies residues 341 to 348; the sequence is GHVDHGKT. 341–348 is a binding site for GTP; it reads GHVDHGKT. Positions 366-370 are G2; that stretch reads GITQH. The tract at residues 388–391 is G3; sequence DTPG. Residues 388-392 and 442-445 each bind GTP; these read DTPGH and NKID. The interval 442-445 is G4; the sequence is NKID. A G5 region spans residues 478 to 480; that stretch reads SAK.

The protein belongs to the TRAFAC class translation factor GTPase superfamily. Classic translation factor GTPase family. IF-2 subfamily.

It localises to the cytoplasm. In terms of biological role, one of the essential components for the initiation of protein synthesis. Protects formylmethionyl-tRNA from spontaneous hydrolysis and promotes its binding to the 30S ribosomal subunits. Also involved in the hydrolysis of GTP during the formation of the 70S ribosomal complex. The polypeptide is Translation initiation factor IF-2 (Ruegeria pomeroyi (strain ATCC 700808 / DSM 15171 / DSS-3) (Silicibacter pomeroyi)).